The following is a 206-amino-acid chain: RNA pyrophosphohydrolase (206 aa).

The Nudix hydrolase domain occupies 6 to 149; the sequence is GYRPNVGIVL…KRGVYARALR (144 aa). The short motif at 38 to 59 is the Nudix box element; the sequence is GGMNTDETPVEAMYRELQEETG. A disordered region spans residues 175–206; that stretch reads MPGHTAGHDRPRKRPRTRGYWPKKATGDGPAS.

The protein belongs to the Nudix hydrolase family. RppH subfamily. It depends on a divalent metal cation as a cofactor.

Accelerates the degradation of transcripts by removing pyrophosphate from the 5'-end of triphosphorylated RNA, leading to a more labile monophosphorylated state that can stimulate subsequent ribonuclease cleavage. The protein is RNA pyrophosphohydrolase of Stenotrophomonas maltophilia (strain K279a).